A 435-amino-acid chain; its full sequence is MSDFSPREIVSELDRHIVGQGKAKRAVAIALRNRWRRQQLQGHMREEVLPKNILMIGPTGVGKTEISRRLARLAGAPFLKVEATKFTEVGYVGRDVEQIIRDLVEVGIGLVREQKRKDVQARAHLAAEERVLDALVGANSSSTTRDAFRKKLRAGELDEKEVEIEVQAGAQGMPMFEIPGMPGAQMGAVSLGDMLGKAFGGRTKARRVLVKDAHPLLLTEEADKLIDQEATTQEAIYAVENNGIVFLDEIDKIAQREGRSGADVSREGVQRDLLPLIEGTTVSTKHGPVKTDHILFIASGAFHVSKPSDLLPELQGRLPIRVELEALTRADFVRILTETEASLVKQSVALMGTEGVTLDISPDAVEAIADVAVEVNSTVENIGARRLQTVMERVLDELSFTAPDRSGETVSIDAAYVRERVADLAKNADLSRFIL.

ATP is bound by residues V18, 60–65 (GVGKTE), D248, E313, and R385.

Belongs to the ClpX chaperone family. HslU subfamily. A double ring-shaped homohexamer of HslV is capped on each side by a ring-shaped HslU homohexamer. The assembly of the HslU/HslV complex is dependent on binding of ATP.

The protein resides in the cytoplasm. In terms of biological role, ATPase subunit of a proteasome-like degradation complex; this subunit has chaperone activity. The binding of ATP and its subsequent hydrolysis by HslU are essential for unfolding of protein substrates subsequently hydrolyzed by HslV. HslU recognizes the N-terminal part of its protein substrates and unfolds these before they are guided to HslV for hydrolysis. The sequence is that of ATP-dependent protease ATPase subunit HslU from Azorhizobium caulinodans (strain ATCC 43989 / DSM 5975 / JCM 20966 / LMG 6465 / NBRC 14845 / NCIMB 13405 / ORS 571).